The following is a 663-amino-acid chain: DNA ligase (663 aa).

NAD(+)-binding positions include 31–35 (DFEFD), 80–81 (SL), and Glu-110. The active-site N6-AMP-lysine intermediate is Lys-112. Residues Arg-133, Glu-170, Lys-285, and Lys-309 each contribute to the NAD(+) site. The Zn(2+) site is built by Cys-404, Cys-407, Cys-422, and Cys-428. Positions 585 to 663 (FIDNKLAGKT…SEDEFLKMIE (79 aa)) constitute a BRCT domain.

The protein belongs to the NAD-dependent DNA ligase family. LigA subfamily. Mg(2+) is required as a cofactor. It depends on Mn(2+) as a cofactor.

The enzyme catalyses NAD(+) + (deoxyribonucleotide)n-3'-hydroxyl + 5'-phospho-(deoxyribonucleotide)m = (deoxyribonucleotide)n+m + AMP + beta-nicotinamide D-nucleotide.. Functionally, DNA ligase that catalyzes the formation of phosphodiester linkages between 5'-phosphoryl and 3'-hydroxyl groups in double-stranded DNA using NAD as a coenzyme and as the energy source for the reaction. It is essential for DNA replication and repair of damaged DNA. This chain is DNA ligase, found in Azobacteroides pseudotrichonymphae genomovar. CFP2.